We begin with the raw amino-acid sequence, 417 residues long: uncharacterized protein (417 aa).

A signal peptide spans 1–21; the sequence is MPYYWGAILIGGVFLAGCTQN.

This is an uncharacterized protein from Methanocaldococcus jannaschii (strain ATCC 43067 / DSM 2661 / JAL-1 / JCM 10045 / NBRC 100440) (Methanococcus jannaschii).